A 309-amino-acid chain; its full sequence is Mitochondrial brown fat uncoupling protein 1 (309 aa).

Over 2 to 10 (VGHTESDVP) the chain is Mitochondrial intermembrane. The helical transmembrane segment at 11–32 (PTMAVKIFSAGVAACVADIITF) threads the bilayer. Solcar repeat units follow at residues 11 to 106 (PTMA…VQEF), 113 to 203 (ASLG…MKEA), and 212 to 297 (DDVP…LKQE). Topologically, residues 33 to 77 (PLDTAKVRLQVGSAIQGECLISSAIRYKGVLGTIITLAKTEGPVK) are mitochondrial matrix. Lysine 60 lines the fatty acid 16:0 pocket. A helical membrane pass occupies residues 78–100 (LYSGLPAGLQRQISFASLRIGLY). Topologically, residues 101–118 (DTVQEFFTTGKEASLGSK) are mitochondrial intermembrane. Residues 119–135 (ISAGLMTGGVAVFIGQP) traverse the membrane as a helical segment. Over 136-180 (TEVVKVRLQAQSHLHGPKPRYTGTYNAYRIIATTEGLTGLWKGTT) the chain is Mitochondrial matrix. Residues 181-197 (PNLTRNVIINCTELVTY) traverse the membrane as a helical segment. Residues 198–214 (DLMKEALVKNKLLADDV) lie on the Mitochondrial intermembrane side of the membrane. Residues 215–234 (PCHFVSAVVAGFCTTVLSSP) traverse the membrane as a helical segment. Topologically, residues 235–268 (VDVVKTRFVNSSPGQYTSVPNCAMMMLTREGPSA) are mitochondrial matrix. Cysteine 256 carries the post-translational modification Cysteine sulfenic acid (-SOH). A helical transmembrane segment spans residues 269–291 (FFKGFVPSFLRLGSWNIIMFVCF). Lysine 271 contributes to the fatty acid 16:0 binding site. At 292–309 (EQLKQELMKSRHTMDCAT) the chain is on the mitochondrial intermembrane side.

The protein belongs to the mitochondrial carrier (TC 2.A.29) family. In terms of assembly, most probably functions as a monomer. Binds one purine nucleotide per monomer. However, has also been suggested to function as a homodimer or a homotetramer. Tightly associates with cardiolipin in the mitochondrion inner membrane; may stabilize and regulate its activity. Post-translationally, may undergo sulfenylation upon cold exposure. May increase the sensitivity of UCP1 thermogenic function to the activation by noradrenaline probably through structural effects. In terms of processing, may undergo ubiquitin-mediated proteasomal degradation.

The protein localises to the mitochondrion inner membrane. The catalysed reaction is H(+)(in) = H(+)(out). Its activity is regulated as follows. Has no constitutive proton transporter activity and has to be activated by long-chain fatty acids/LCFAs. Inhibited by purine nucleotides. Both purine nucleotides and LCFAs bind the cytosolic side of the transporter and directly compete to activate or inhibit it. Activated by noradrenaline and reactive oxygen species. Despite lacking canonical translational encoding for selenocysteine, a small pool of the protein has been observed to selectively incorporate selenocysteine at 'Cys-256'. Selenocysteine-modified protein is highly sensitive to redox modification and may constitute a pool of protein highly sensitive to activation by elevated levels of reactive oxygen species (ROS). Its function is as follows. Mitochondrial protein responsible for thermogenic respiration, a specialized capacity of brown adipose tissue and beige fat that participates in non-shivering adaptive thermogenesis to temperature and diet variations and more generally to the regulation of energy balance. Functions as a long-chain fatty acid/LCFA and proton symporter, simultaneously transporting one LCFA and one proton through the inner mitochondrial membrane. However, LCFAs remaining associated with the transporter via their hydrophobic tails, it results in an apparent transport of protons activated by LCFAs. Thereby, dissipates the mitochondrial proton gradient and converts the energy of substrate oxydation into heat instead of ATP. Regulates the production of reactive oxygen species/ROS by mitochondria. The sequence is that of Mitochondrial brown fat uncoupling protein 1 from Bos taurus (Bovine).